The following is a 150-amino-acid chain: Large ribosomal subunit protein uL13 (150 aa).

It belongs to the universal ribosomal protein uL13 family. Part of the 50S ribosomal subunit.

This protein is one of the early assembly proteins of the 50S ribosomal subunit, although it is not seen to bind rRNA by itself. It is important during the early stages of 50S assembly. In Chlorobaculum parvum (strain DSM 263 / NCIMB 8327) (Chlorobium vibrioforme subsp. thiosulfatophilum), this protein is Large ribosomal subunit protein uL13.